A 322-amino-acid polypeptide reads, in one-letter code: ATP-dependent 6-phosphofructokinase (322 aa).

G11 contributes to the ATP binding site. 21 to 25 (RAVVR) provides a ligand contact to ADP. Residues 72–73 (RC) and 102–105 (GDGS) contribute to the ATP site. Residue D103 participates in Mg(2+) binding. Residue 127–129 (TID) participates in substrate binding. Catalysis depends on D129, which acts as the Proton acceptor. R156 provides a ligand contact to ADP. Substrate-binding positions include R164 and 171-173 (MGR). Residues 187-189 (GAE), R213, and 215-217 (KKH) contribute to the ADP site. Residues E224, R245, and 251–254 (HVQR) contribute to the substrate site.

Belongs to the phosphofructokinase type A (PFKA) family. ATP-dependent PFK group I subfamily. Prokaryotic clade 'B1' sub-subfamily. Homotetramer. It depends on Mg(2+) as a cofactor.

It localises to the cytoplasm. The enzyme catalyses beta-D-fructose 6-phosphate + ATP = beta-D-fructose 1,6-bisphosphate + ADP + H(+). It functions in the pathway carbohydrate degradation; glycolysis; D-glyceraldehyde 3-phosphate and glycerone phosphate from D-glucose: step 3/4. Its activity is regulated as follows. Allosterically activated by ADP and other diphosphonucleosides, and allosterically inhibited by phosphoenolpyruvate. Catalyzes the phosphorylation of D-fructose 6-phosphate to fructose 1,6-bisphosphate by ATP, the first committing step of glycolysis. The polypeptide is ATP-dependent 6-phosphofructokinase (Staphylococcus aureus (strain JH1)).